We begin with the raw amino-acid sequence, 351 residues long: Quinolinate phosphoribosyltransferase [decarboxylating] 2, mitochondrial (351 aa).

Residues Arg-142, 173–175 (TRK), Arg-197, Lys-207, Glu-240, Asp-267, 299–301 (SGN), and 320–322 (SGA) each bind substrate.

Belongs to the NadC/ModD family.

It is found in the mitochondrion. It catalyses the reaction nicotinate beta-D-ribonucleotide + CO2 + diphosphate = quinolinate + 5-phospho-alpha-D-ribose 1-diphosphate + 2 H(+). The protein operates within alkaloid biosynthesis; nicotine biosynthesis. It functions in the pathway cofactor biosynthesis; NAD(+) biosynthesis; nicotinate D-ribonucleotide from quinolinate: step 1/1. In terms of biological role, involved in the biosynthesis of pyridine alkaloid natural products, leading mainly to the production of anabasine, anatabine, nicotine and nornicotine, effective deterrents against herbivores with antiparasitic and pesticide properties (neurotoxins); nornicotine serves as the precursor in the synthesis of the carcinogen compound N'-nitrosonornicotine (NNN). Involved in the catabolism of quinolinic acid (QA). The chain is Quinolinate phosphoribosyltransferase [decarboxylating] 2, mitochondrial from Nicotiana glauca (Glaucous tobacco).